The following is a 327-amino-acid chain: Urokinase plasminogen activator surface receptor (327 aa).

Positions 1–23 (MGLPRRLLLLLLLATTCVPASQG) are cleaved as a signal peptide. 3 consecutive UPAR/Ly6 domains span residues 24–117 (LQCM…GRYL), 117–212 (LECA…PPNG), and 213–298 (FQCY…SPTG). Cystine bridges form between cysteine 26–cysteine 47, cysteine 29–cysteine 35, and cysteine 40–cysteine 68. Asparagine 32 carries N-linked (GlcNAc...) asparagine glycosylation. N-linked (GlcNAc...) asparagine glycosylation occurs at asparagine 75. Cystine bridges form between cysteine 94-cysteine 99, cysteine 119-cysteine 146, cysteine 122-cysteine 129, cysteine 139-cysteine 168, cysteine 174-cysteine 191, cysteine 192-cysteine 197, cysteine 215-cysteine 243, cysteine 218-cysteine 226, cysteine 236-cysteine 262, cysteine 268-cysteine 287, and cysteine 288-cysteine 293. N-linked (GlcNAc...) asparagine glycans are attached at residues asparagine 183, asparagine 193, asparagine 221, asparagine 254, and asparagine 282. Residue glycine 298 is the site of GPI-anchor amidated glycine attachment. Residues 299–327 (GAPRPGPAQLSLIASLLLTLGLWGVLLWT) constitute a propeptide, removed in mature form.

In terms of assembly, monomer. Interacts (via the UPAR/Ly6 domains) with SRPX2. Interacts with MRC2. Interacts with SORL1 (via N-terminal ectodomain); this interaction decreases PLAUR internalization. The ternary complex composed of PLAUR-PLAU-SERPINE1 also interacts with SORL1. Interacts with CD82; this interaction prevents PLAUR from binding to its high affinity ligand PLAU. Expressed in angiogenic endothelial cells (at protein level).

It is found in the cell membrane. Its subcellular location is the secreted. Its function is as follows. Acts as a receptor for urokinase plasminogen activator. Plays a role in localizing and promoting plasmin formation. Mediates the proteolysis-independent signal transduction activation effects of U-PA. The sequence is that of Urokinase plasminogen activator surface receptor (Plaur) from Mus musculus (Mouse).